The primary structure comprises 513 residues: ATP synthase subunit alpha (513 aa).

Residue 169–176 participates in ATP binding; the sequence is GDRQCGKT.

It belongs to the ATPase alpha/beta chains family. F-type ATPases have 2 components, CF(1) - the catalytic core - and CF(0) - the membrane proton channel. CF(1) has five subunits: alpha(3), beta(3), gamma(1), delta(1), epsilon(1). CF(0) has three main subunits: a(1), b(2) and c(9-12). The alpha and beta chains form an alternating ring which encloses part of the gamma chain. CF(1) is attached to CF(0) by a central stalk formed by the gamma and epsilon chains, while a peripheral stalk is formed by the delta and b chains.

It is found in the cell inner membrane. The enzyme catalyses ATP + H2O + 4 H(+)(in) = ADP + phosphate + 5 H(+)(out). Functionally, produces ATP from ADP in the presence of a proton gradient across the membrane. The alpha chain is a regulatory subunit. This is ATP synthase subunit alpha from Alteromonas mediterranea (strain DSM 17117 / CIP 110805 / LMG 28347 / Deep ecotype).